The primary structure comprises 323 residues: uncharacterized protein (323 aa).

Residues 16 to 95 enclose the S4 RNA-binding domain; it reads QRIDQFCLKI…DKLKIIFEDE (80 aa). The active site involves Asp-148.

Belongs to the pseudouridine synthase RluA family.

The catalysed reaction is a uridine in RNA = a pseudouridine in RNA. This is an uncharacterized protein from Mycoplasma genitalium (strain ATCC 33530 / DSM 19775 / NCTC 10195 / G37) (Mycoplasmoides genitalium).